The primary structure comprises 705 residues: MEKPRSIEETPSSEPMEEEEDDDLELFGGYDSFRSYNSSVGSESSSYLEESSEAENEDREAGELPTSPLHLLSPGTPRSLDGSGSEPAVCEMCGIVGTREAFFSKTKRFCSVSCSRSYSSNSKKASILARLQGKPPTKKAKVLHKAAWSAKIGAFLHSQGTGQLADGTPTGQDALVLGFDWGKFLKDHSYKAAPVSCFKHVPLYDQWEDVMKGMKVEVLNSDAVLPSRVYWIASVIQTAGYRVLLRYEGFENDASHDFWCNLGTVDVHPIGWCAINSKILVPPRTIHAKFTDWKGYLMKRLVGSRTLPVDFHIKMVESMKYPFRQGMRLEVVDKSQVSRTRMAVVDTVIGGRLRLLYEDGDSDDDFWCHMWSPLIHPVGWSRRVGHGIKMSERRSDMAHHPTFRKIYCDAVPYLFKKVRAVYTEGGWFEEGMKLEAIDPLNLGNICVATVCKVLLDGYLMICVDGGPSTDGLDWFCYHASSHAIFPATFCQKNDIELTPPKGYEAQTFNWENYLEKTKSKAAPSRLFNMDCPNHGFKVGMKLEAVDLMEPRLICVATVKRVVHRLLSIHFDGWDSEYDQWVDCESPDIYPVGWCELTGYQLQPPVAAEPATPLKAKEATKKKKKQFGKKRKRIPPTKTRPLRQGSKKPLLEDDPQGARKISSEPVPGEIIAVRVKEEHLDVASPDKASSPELPVSVENIKQETDD.

Positions 1–84 are disordered; sequence MEKPRSIEET…GTPRSLDGSG (84 aa). Residue Ser-13 is modified to Phosphoserine. Positions 15-25 are enriched in acidic residues; sequence PMEEEEDDDLE. Residues 38–49 show a composition bias toward low complexity; sequence SSVGSESSSYLE. Positions 50-60 are enriched in acidic residues; it reads ESSEAENEDRE. At Ser-67 the chain carries Phosphoserine. Phosphothreonine is present on Thr-76. The segment at 81 to 116 adopts an FCS-type zinc-finger fold; the sequence is DGSGSEPAVCEMCGIVGTREAFFSKTKRFCSVSCSR. Positions 90, 93, 110, and 114 each coordinate Zn(2+). MBT repeat units follow at residues 179–283, 291–391, 397–500, and 508–604; these read FDWG…LVPP, TDWK…IKMS, MAHH…LTPP, and FNWE…LQPP. The residue at position 338 (Ser-338) is a Phosphoserine. A Glycyl lysine isopeptide (Lys-Gly) (interchain with G-Cter in SUMO2) cross-link involves residue Lys-405. Positions 608 to 665 are disordered; that stretch reads EPATPLKAKEATKKKKKQFGKKRKRIPPTKTRPLRQGSKKPLLEDDPQGARKISSEPV. Residues 619–634 show a composition bias toward basic residues; it reads TKKKKKQFGKKRKRIP. Glycyl lysine isopeptide (Lys-Gly) (interchain with G-Cter in SUMO2) cross-links involve residues Lys-647, Lys-659, and Lys-675. The segment at 680 to 705 is disordered; the sequence is DVASPDKASSPELPVSVENIKQETDD. 3 positions are modified to phosphoserine: Ser-683, Ser-688, and Ser-689. Lys-700 participates in a covalent cross-link: Glycyl lysine isopeptide (Lys-Gly) (interchain with G-Cter in SUMO1); alternate. Lys-700 participates in a covalent cross-link: Glycyl lysine isopeptide (Lys-Gly) (interchain with G-Cter in SUMO2); alternate.

As to quaternary structure, part of the E2F6.com-1 complex in G0 phase composed of E2F6, MGA, MAX, TFDP1, CBX3, BAT8, EUHMTASE1, RING1, RNF2, MBLR, BAT8 and YAF2.

The protein resides in the nucleus. Functionally, putative Polycomb group (PcG) protein. PcG proteins maintain the transcriptionally repressive state of genes, probably via a modification of chromatin, rendering it heritably changed in its expressibility. Its association with a chromatin-remodeling complex suggests that it may contribute to prevent expression of genes that trigger the cell into mitosis. Binds to monomethylated and dimethylated 'Lys-20' on histone H4. Binds histone H3 peptides that are monomethylated or dimethylated on 'Lys-4', 'Lys-9' or 'Lys-27'. The sequence is that of Lethal(3)malignant brain tumor-like protein 2 (L3MBTL2) from Homo sapiens (Human).